The primary structure comprises 909 residues: Nitrate reductase [NADH] (909 aa).

Position 187 (cysteine 187) interacts with Mo-molybdopterin. The Cytochrome b5 heme-binding domain maps to serine 535 to isoleucine 610. Heme contacts are provided by histidine 570 and histidine 593. Residues arginine 652 to glutamine 764 form the FAD-binding FR-type domain. Residues arginine 704–threonine 707, valine 721–tyrosine 725, phenylalanine 726, phenylalanine 733, glutamine 738–serine 740, and threonine 791 each bind FAD.

The protein belongs to the nitrate reductase family. In terms of assembly, homodimer. It depends on FAD as a cofactor. Heme serves as cofactor. Mo-molybdopterin is required as a cofactor.

It catalyses the reaction nitrite + NAD(+) + H2O = nitrate + NADH + H(+). Its activity is regulated as follows. Regulated by the nitrogen source and controlled by the circadian rhythm. Functionally, nitrate reductase is a key enzyme involved in the first step of nitrate assimilation in plants, fungi and bacteria. This chain is Nitrate reductase [NADH] (NIA), found in Petunia hybrida (Petunia).